The sequence spans 371 residues: F-box protein At2g26850 (371 aa).

Residues lysine 59 to histidine 105 form the F-box domain.

The chain is F-box protein At2g26850 from Arabidopsis thaliana (Mouse-ear cress).